We begin with the raw amino-acid sequence, 269 residues long: Trans-aconitate 2-methyltransferase (269 aa).

The protein belongs to the methyltransferase superfamily. Tam family.

It localises to the cytoplasm. It carries out the reaction trans-aconitate + S-adenosyl-L-methionine = (E)-3-(methoxycarbonyl)pent-2-enedioate + S-adenosyl-L-homocysteine. In terms of biological role, catalyzes the S-adenosylmethionine monomethyl esterification of trans-aconitate. The polypeptide is Trans-aconitate 2-methyltransferase (Streptomyces avermitilis (strain ATCC 31267 / DSM 46492 / JCM 5070 / NBRC 14893 / NCIMB 12804 / NRRL 8165 / MA-4680)).